We begin with the raw amino-acid sequence, 207 residues long: MSDENRLVAAVRTEFGKGAARRARRDGQVPAVLYGHGEDPRHLNVPSRDFAAILRAHGTNAILTLDIEGKEQVALTKSVVVHPIRNYIEHADLLVIKKGEKVTVDVPVVVTGEAAAGTLVAQDAATISLEADALHIPEQIEVSVEGLEVGTQILANQLELPKGSTLQADEELLIVNVVAAPTAADLEEETGEAAAEAEAPAEEGAES.

Residues 185–207 (DLEEETGEAAAEAEAPAEEGAES) form a disordered region.

The protein belongs to the bacterial ribosomal protein bL25 family. CTC subfamily. As to quaternary structure, part of the 50S ribosomal subunit; part of the 5S rRNA/L5/L18/L25 subcomplex. Contacts the 5S rRNA. Binds to the 5S rRNA independently of L5 and L18.

This is one of the proteins that binds to the 5S RNA in the ribosome where it forms part of the central protuberance. The chain is Large ribosomal subunit protein bL25 from Rhodococcus jostii (strain RHA1).